The following is a 73-amino-acid chain: NAD(P)H-quinone oxidoreductase subunit L (73 aa).

2 helical membrane-spanning segments follow: residues 7-27 (LIGLTYAALAVLYLLVLPFLF) and 44-64 (VLMFFLVLFFFPGMVLVAPFM).

It belongs to the complex I NdhL subunit family. As to quaternary structure, NDH-1 can be composed of about 15 different subunits; different subcomplexes with different compositions have been identified which probably have different functions.

It localises to the cellular thylakoid membrane. The catalysed reaction is a plastoquinone + NADH + (n+1) H(+)(in) = a plastoquinol + NAD(+) + n H(+)(out). The enzyme catalyses a plastoquinone + NADPH + (n+1) H(+)(in) = a plastoquinol + NADP(+) + n H(+)(out). In terms of biological role, NDH-1 shuttles electrons from an unknown electron donor, via FMN and iron-sulfur (Fe-S) centers, to quinones in the respiratory and/or the photosynthetic chain. The immediate electron acceptor for the enzyme in this species is believed to be plastoquinone. Couples the redox reaction to proton translocation, and thus conserves the redox energy in a proton gradient. Cyanobacterial NDH-1 also plays a role in inorganic carbon-concentration. The sequence is that of NAD(P)H-quinone oxidoreductase subunit L from Synechococcus sp. (strain JA-3-3Ab) (Cyanobacteria bacterium Yellowstone A-Prime).